The sequence spans 399 residues: Tryptophan synthase beta chain (399 aa).

Position 92 is an N6-(pyridoxal phosphate)lysine (Lys-92).

It belongs to the TrpB family. As to quaternary structure, tetramer of two alpha and two beta chains. Pyridoxal 5'-phosphate serves as cofactor.

The catalysed reaction is (1S,2R)-1-C-(indol-3-yl)glycerol 3-phosphate + L-serine = D-glyceraldehyde 3-phosphate + L-tryptophan + H2O. Its pathway is amino-acid biosynthesis; L-tryptophan biosynthesis; L-tryptophan from chorismate: step 5/5. The beta subunit is responsible for the synthesis of L-tryptophan from indole and L-serine. This is Tryptophan synthase beta chain from Thiobacillus denitrificans (strain ATCC 25259 / T1).